The chain runs to 73 residues: uncharacterized protein (73 aa).

The signal sequence occupies residues 1 to 30; sequence MVDFYFIEEKVAYRAAFTTTGKIAATLGLA.

This is an uncharacterized protein from Archaeoglobus fulgidus (strain ATCC 49558 / DSM 4304 / JCM 9628 / NBRC 100126 / VC-16).